The following is a 457-amino-acid chain: Senescence-associated protein OSA15, chloroplastic (457 aa).

Residues 1 to 57 (MATRIPGTVAASGVYYNDQYRMPCKLKGIHCMALNCIPQKAKVRKCMNGYQSTFRFC) constitute a chloroplast transit peptide.

The protein belongs to the ATA15/OSA15 family. Expressed in leaves (at protein level).

The protein localises to the plastid. It localises to the chloroplast. In terms of biological role, may be involved in the regulation of leaf senescence. This Oryza sativa subsp. japonica (Rice) protein is Senescence-associated protein OSA15, chloroplastic.